Here is a 299-residue protein sequence, read N- to C-terminus: NAD kinase (299 aa).

Asp71 functions as the Proton acceptor in the catalytic mechanism. NAD(+) contacts are provided by residues 71 to 72, 145 to 146, Arg173, Asp175, 186 to 191, Ala210, and Gln248; these read DG, ND, and TAYSLS.

The protein belongs to the NAD kinase family. Requires a divalent metal cation as cofactor.

It is found in the cytoplasm. The catalysed reaction is NAD(+) + ATP = ADP + NADP(+) + H(+). Functionally, involved in the regulation of the intracellular balance of NAD and NADP, and is a key enzyme in the biosynthesis of NADP. Catalyzes specifically the phosphorylation on 2'-hydroxyl of the adenosine moiety of NAD to yield NADP. This is NAD kinase from Bordetella pertussis (strain Tohama I / ATCC BAA-589 / NCTC 13251).